The primary structure comprises 751 residues: Catalase-peroxidase 1 (751 aa).

Residues 1–11 are compositionally biased toward basic and acidic residues; sequence MTDKQHTRSVS. Residues 1–31 form a disordered region; the sequence is MTDKQHTRSVSESENPAIPSPTPKVSRPRRN. Residues 103–225 constitute a cross-link (tryptophyl-tyrosyl-methioninium (Trp-Tyr) (with M-251)); sequence WHAAGTYRIA…LANVQMGLIY (123 aa). Histidine 104 serves as the catalytic Proton acceptor. A cross-link (tryptophyl-tyrosyl-methioninium (Tyr-Met) (with W-103)) is located at residues 225–251; the sequence is YVNPEGPGGNPDPLAAARDIRETFARM. Histidine 266 contacts heme b. Residues 345 to 375 form a disordered region; that stretch reads AGAKQWKPKNPEANDTVPDAHGASRRHSPTM.

The protein belongs to the peroxidase family. Peroxidase/catalase subfamily. Homodimer or homotetramer. It depends on heme b as a cofactor. Post-translationally, formation of the three residue Trp-Tyr-Met cross-link is important for the catalase, but not the peroxidase activity of the enzyme.

The enzyme catalyses H2O2 + AH2 = A + 2 H2O. It carries out the reaction 2 H2O2 = O2 + 2 H2O. Its function is as follows. Bifunctional enzyme with both catalase and broad-spectrum peroxidase activity. This Cupriavidus pinatubonensis (strain JMP 134 / LMG 1197) (Cupriavidus necator (strain JMP 134)) protein is Catalase-peroxidase 1.